Consider the following 256-residue polypeptide: E3 ubiquitin-protein ligase MIR2 (256 aa).

The Cytoplasmic segment spans residues 1–83; sequence MASKDVEEGV…NLWPEMERQE (83 aa). An RING-CH-type zinc finger spans residues 7–66; the sequence is EEGVEGPICWICREEVGNEGIHPCACTGELDVVHPQCLSTWLTVSRNTACQMCRVIYRTR. Cysteine 15, cysteine 18, cysteine 30, cysteine 32, histidine 40, cysteine 43, cysteine 56, and cysteine 59 together coordinate Zn(2+). A helical transmembrane segment spans residues 84 to 104; that stretch reads IFELFLLMSVVVAGLVGVALC. Topologically, residues 105 to 124 are extracellular; that stretch reads TWTLLVILTAPAGTFSPGAV. A helical membrane pass occupies residues 125 to 145; it reads LGFLCFFGFYQIFIVFAFGGI. The Cytoplasmic segment spans residues 146–256; it reads CRVSGTVRAL…VRKNHPKNNG (111 aa). The disordered stretch occupies residues 179–256; sequence DNIELTVLVG…VRKNHPKNNG (78 aa). Over residues 193-203 the composition is skewed to acidic residues; it reads TDEEPTDESSE. Basic residues predominate over residues 245–256; it reads KPVRKNHPKNNG.

In terms of assembly, binds human MHC-I, CD86, ICAM1 and CD1D.

It is found in the host cell membrane. Its subcellular location is the host endoplasmic reticulum. It catalyses the reaction S-ubiquitinyl-[E2 ubiquitin-conjugating enzyme]-L-cysteine + [acceptor protein]-L-lysine = [E2 ubiquitin-conjugating enzyme]-L-cysteine + N(6)-ubiquitinyl-[acceptor protein]-L-lysine.. It functions in the pathway protein modification; protein ubiquitination. Membrane-bound E3 ubiquitin ligase expressed at the immediate early stage of viral reactivation to mediate polyubiquitination of various host membrane proteins related to the immune response. Promotes ubiquitination and subsequent degradation of host MHC-I, CD86, DC-SIGN and DC-SIGNR, ICAM1 and CD1D molecules, presumably to prevent lysis of infected cells by cytotoxic T-lymphocytes and NK cell. Plays a role in the down-regulation of the host stress-induced NKG2D ligands MICA, MICB and CLEC2B, which enable immune cells expressing the NKG2D receptor to recognize and annihilate infected cells prior to viral spread. Alters monocyte metabolism and proliferation by mediating rapid internalization of cellular growth factor-binding receptor tyrosine kinases from the surface leading to increased signaling. This is E3 ubiquitin-protein ligase MIR2 (K5) from Homo sapiens (Human).